Reading from the N-terminus, the 311-residue chain is Eukaryotic translation initiation factor 3 subunit E (311 aa).

The PCI domain occupies 100–280 (VYYNYPKGRD…MGVKSVSIHE (181 aa)).

The protein belongs to the eIF-3 subunit E family. As to quaternary structure, component of the eukaryotic translation initiation factor 3 (eIF-3) complex.

Its subcellular location is the cytoplasm. In terms of biological role, component of the eukaryotic translation initiation factor 3 (eIF-3) complex, which is involved in protein synthesis of a specialized repertoire of mRNAs and, together with other initiation factors, stimulates binding of mRNA and methionyl-tRNAi to the 40S ribosome. The eIF-3 complex specifically targets and initiates translation of a subset of mRNAs involved in cell proliferation. This Caenorhabditis briggsae protein is Eukaryotic translation initiation factor 3 subunit E.